A 680-amino-acid polypeptide reads, in one-letter code: Probable galacturonosyltransferase 3 (680 aa).

Residues 1 to 6 (MTTFST) are Cytoplasmic-facing. The chain crosses the membrane as a helical; Signal-anchor for type II membrane protein span at residues 7-27 (CAAFLSLVVVLHAVHVGGAIL). Residues 28-680 (ESQAPHRELK…PYLRRCDINE (653 aa)) lie on the Lumenal side of the membrane. Residues 118–146 (SFQNDTGMEDNASHSTTNQTDESENQFPN) are disordered. N121, N128, N135, N239, N386, N438, N545, N578, N610, and N631 each carry an N-linked (GlcNAc...) asparagine glycan. The span at 130-145 (SHSTTNQTDESENQFP) shows a compositional bias: polar residues.

This sequence belongs to the glycosyltransferase 8 family. In terms of tissue distribution, expressed in roots, inflorescences, siliques, leaves and stems.

Its subcellular location is the golgi apparatus membrane. It participates in glycan metabolism; pectin biosynthesis. Its function is as follows. May be involved in pectin and/or xylans biosynthesis in cell walls. The polypeptide is Probable galacturonosyltransferase 3 (GAUT3) (Arabidopsis thaliana (Mouse-ear cress)).